The chain runs to 547 residues: Sodium/hydrogen exchanger 9B2 (547 aa).

The segment at 1-68 (MEDEDKTAEC…PQDSPTEPNG (68 aa)) is disordered. The Cytoplasmic segment spans residues 1 to 86 (MEDEDKTAEC…ACPPRGCLAR (86 aa)). Residues 23-45 (APPHHELQEERVMSLRGTDRSEP) show a composition bias toward basic and acidic residues. A Phosphoserine modification is found at S49. Residues 87–104 (VITNGTMVVLLWAMVWSV) form a helical membrane-spanning segment. The Extracellular portion of the chain corresponds to 105–113 (TGPECLPGG). A helical membrane pass occupies residues 114-133 (NLFGIIILFYCSITGGKLFG). Residues 134–144 (LIKFPTLPPLP) are Cytoplasmic-facing. The helical transmembrane segment at 145–161 (PLLGMLLAGFLLRNIPV) threads the bilayer. Topologically, residues 162–171 (INDSVRIQHK) are extracellular. Residues 172 to 189 (WSSSLRSIALSVILVRAG) traverse the membrane as a helical segment. Residues 190–200 (LGLDSKALRKL) lie on the Cytoplasmic side of the membrane. A helical membrane pass occupies residues 201-227 (KGVCVRLAMGPCIVEACASAILSHFLM). At 228 to 233 (GLPWQW) the chain is on the extracellular side. Residues 234–242 (GFILGFVVG) traverse the membrane as a helical segment. Over 243 to 270 (AVSPAVVVPSMLLLQEGGYGVGKGIPTL) the chain is Cytoplasmic. Residues V244, G275, D278, and D279 each coordinate Na(+). Residues 271–290 (LMAAGSFDDILAITGFNTCL) traverse the membrane as a helical segment. Residues 291 to 300 (GVAFSTGSTV) lie on the Extracellular side of the membrane. The chain crosses the membrane as a helical span at residues 301-324 (FNIFRGILEVVIGVAAGSFLGFFI). Topologically, residues 325–339 (QYFPSRDQDNLVWKR) are cytoplasmic. The helical transmembrane segment at 340–357 (AFLVLGFAVLAVFSSVYF) threads the bilayer. At 358–361 (SFPG) the chain is on the extracellular side. A helical membrane pass occupies residues 362-373 (SGGLCTLVMAFL). The Cytoplasmic portion of the chain corresponds to 374–390 (AGMRWTDKKSEVEKVIA). A helical transmembrane segment spans residues 391 to 411 (VTWDVFQPLLFGLIGAEVSIV). At 412–417 (SLRAET) the chain is on the extracellular side. Residues 418 to 440 (VGLCVATLSIAVLIRILTTFLMV) traverse the membrane as a helical segment. At 441-461 (CFAGFNIKEKIFISFAWLPKA) the chain is on the cytoplasmic side. Residues 462-473 (TVQAAIGSVALD) form a helical membrane-spanning segment. The Extracellular portion of the chain corresponds to 474–486 (TARSHGEKQLEDY). Residues 487–509 (GMDVLTVAFLAILITAPIGSLLI) form a helical membrane-spanning segment. Residues 510 to 547 (GLLGPRVLQKSEHRTEEEVQGETSAHIQRKPEDSITEA) lie on the Cytoplasmic side of the membrane. The disordered stretch occupies residues 522–547 (HRTEEEVQGETSAHIQRKPEDSITEA). The span at 538–547 (RKPEDSITEA) shows a compositional bias: basic and acidic residues.

It belongs to the monovalent cation:proton antiporter 1 (CPA1) transporter (TC 2.A.36) family. As to quaternary structure, homodimer; dimerization is essential for SLC9B2 activity. Lipids seem to play a role in the stabilization of the dimerization subdomain. In terms of tissue distribution, widely expressed. However expression seems to be restricted to specific cell types within individual organs, e.g. osteoclasts in the bone, distal tubules of the kidney or beta-cells of Langerhans islets. In sperm specifically present in the principal piece of sperm tail (at protein level).

The protein resides in the cell membrane. Its subcellular location is the mitochondrion membrane. It is found in the endosome membrane. The protein localises to the lysosome membrane. It localises to the recycling endosome membrane. The protein resides in the cytoplasmic vesicle. Its subcellular location is the secretory vesicle. It is found in the synaptic vesicle membrane. The protein localises to the cell projection. It localises to the cilium. The protein resides in the flagellum membrane. Its subcellular location is the basolateral cell membrane. It is found in the apical cell membrane. The catalysed reaction is Na(+)(in) + H(+)(out) = Na(+)(out) + H(+)(in). It catalyses the reaction Li(+)(out) + H(+)(in) = Li(+)(in) + H(+)(out). The enzyme catalyses Li(+)(in) + Na(+)(out) = Li(+)(out) + Na(+)(in). Allosterically inhibited by the N-terminal domain. Inhibited by phloretin. In terms of biological role, electroneutral Na(+) Li(+)/H(+) antiporter that extrudes Na(+) or Li(+) in exchange for external protons across the membrane. Uses the proton gradient/membrane potential to extrude sodium. Contributes to the regulation of intracellular pH and sodium homeostasis. Also able to mediate Na(+)/Li(+) antiporter activity in kidney. May play a physiological role in renal tubular function and blood pressure homeostasis. Plays an important role for insulin secretion and clathrin-mediated endocytosis in beta-cells. Involved in sperm motility and fertility. It is controversial whether SLC9B2 plays a role in osteoclast differentiation or not. This is Sodium/hydrogen exchanger 9B2 from Mus musculus (Mouse).